Here is a 481-residue protein sequence, read N- to C-terminus: Glutamyl-tRNA(Gln) amidotransferase subunit A (481 aa).

Residues K78 and S153 each act as charge relay system in the active site. S177 (acyl-ester intermediate) is an active-site residue.

This sequence belongs to the amidase family. GatA subfamily. In terms of assembly, heterotrimer of A, B and C subunits.

It carries out the reaction L-glutamyl-tRNA(Gln) + L-glutamine + ATP + H2O = L-glutaminyl-tRNA(Gln) + L-glutamate + ADP + phosphate + H(+). Allows the formation of correctly charged Gln-tRNA(Gln) through the transamidation of misacylated Glu-tRNA(Gln) in organisms which lack glutaminyl-tRNA synthetase. The reaction takes place in the presence of glutamine and ATP through an activated gamma-phospho-Glu-tRNA(Gln). This chain is Glutamyl-tRNA(Gln) amidotransferase subunit A, found in Borrelia garinii subsp. bavariensis (strain ATCC BAA-2496 / DSM 23469 / PBi) (Borreliella bavariensis).